Consider the following 265-residue polypeptide: Imidazole glycerol phosphate synthase subunit HisF (265 aa).

Active-site residues include Asp17 and Asp136.

The protein belongs to the HisA/HisF family. As to quaternary structure, heterodimer of HisH and HisF.

It localises to the cytoplasm. It carries out the reaction 5-[(5-phospho-1-deoxy-D-ribulos-1-ylimino)methylamino]-1-(5-phospho-beta-D-ribosyl)imidazole-4-carboxamide + L-glutamine = D-erythro-1-(imidazol-4-yl)glycerol 3-phosphate + 5-amino-1-(5-phospho-beta-D-ribosyl)imidazole-4-carboxamide + L-glutamate + H(+). It participates in amino-acid biosynthesis; L-histidine biosynthesis; L-histidine from 5-phospho-alpha-D-ribose 1-diphosphate: step 5/9. IGPS catalyzes the conversion of PRFAR and glutamine to IGP, AICAR and glutamate. The HisF subunit catalyzes the cyclization activity that produces IGP and AICAR from PRFAR using the ammonia provided by the HisH subunit. The chain is Imidazole glycerol phosphate synthase subunit HisF from Mycolicibacterium paratuberculosis (strain ATCC BAA-968 / K-10) (Mycobacterium paratuberculosis).